A 123-amino-acid chain; its full sequence is Small ribosomal subunit protein uS13 (123 aa).

The tract at residues 97–123 (PVRGQRTHTNAKTRKGRSKLPVAAKKK) is disordered.

This sequence belongs to the universal ribosomal protein uS13 family. Part of the 30S ribosomal subunit. Forms a loose heterodimer with protein S19. Forms two bridges to the 50S subunit in the 70S ribosome.

Functionally, located at the top of the head of the 30S subunit, it contacts several helices of the 16S rRNA. In the 70S ribosome it contacts the 23S rRNA (bridge B1a) and protein L5 of the 50S subunit (bridge B1b), connecting the 2 subunits; these bridges are implicated in subunit movement. Contacts the tRNAs in the A and P-sites. The sequence is that of Small ribosomal subunit protein uS13 from Ehrlichia canis (strain Jake).